Reading from the N-terminus, the 879-residue chain is Prostaglandin F2 receptor negative regulator (879 aa).

Residues 1 to 25 (MGRLASRPLLLALLSLALCRGRVVR) form the signal peptide. Ig-like C2-type domains lie at 26–129 (VPTA…ATVQ) and 149–268 (PSAR…KAVE). Residues 26-832 (VPTATLVRVV…MDVLNAFKYP (807 aa)) are Extracellular-facing. Intrachain disulfides connect Cys-43–Cys-119 and Cys-169–Cys-247. N-linked (GlcNAc...) asparagine glycosylation is present at Asn-44. Position 271 is a phosphothreonine (Thr-271). 4 Ig-like C2-type domains span residues 276 to 394 (PSVL…EAVS), 406 to 536 (PDYQ…DVFS), 544 to 662 (ALED…AWSP), and 688 to 813 (PIFN…AEIH). Asn-286, Asn-300, Asn-383, and Asn-413 each carry an N-linked (GlcNAc...) asparagine glycan. Cys-299 and Cys-373 form a disulfide bridge. The Endoplasmic reticulum retention signal motif lies at 424–427 (PTEL). Cys-429 and Cys-515 form a disulfide bridge. N-linked (GlcNAc...) asparagine glycans are attached at residues Asn-525, Asn-600, Asn-618, and Asn-691. The cysteines at positions 571 and 655 are disulfide-linked. Positions 703–705 (RGD) match the Cell attachment site motif. The cysteines at positions 711 and 793 are disulfide-linked. Residues 833–853 (LLIGVGLSTVIGLLSCLIGYC) traverse the membrane as a helical segment. The Cytoplasmic portion of the chain corresponds to 854–879 (SSHWCCKKEVQETRRERRRLMSMEMD).

In terms of assembly, interacts with CD9 and CD81. Part of a complex composed of CD9, CD81 and IGSF8. Also seems to interact with CD63, CD82 and CD151.

Its subcellular location is the endoplasmic reticulum membrane. It localises to the golgi apparatus. The protein localises to the trans-Golgi network membrane. Functionally, inhibits the binding of prostaglandin F2-alpha (PGF2-alpha) to its specific FP receptor, by decreasing the receptor number rather than the affinity constant. Functional coupling with the prostaglandin F2-alpha receptor seems to occur. In myoblasts, associates with tetraspanins CD9 and CD81 to prevent myotube fusion during muscle regeneration. This is Prostaglandin F2 receptor negative regulator (PTGFRN) from Homo sapiens (Human).